Consider the following 439-residue polypeptide: Glutamate-1-semialdehyde 2,1-aminomutase (439 aa).

K273 is modified (N6-(pyridoxal phosphate)lysine).

Belongs to the class-III pyridoxal-phosphate-dependent aminotransferase family. HemL subfamily. As to quaternary structure, homodimer. The cofactor is pyridoxal 5'-phosphate.

Its subcellular location is the cytoplasm. It catalyses the reaction (S)-4-amino-5-oxopentanoate = 5-aminolevulinate. It functions in the pathway porphyrin-containing compound metabolism; protoporphyrin-IX biosynthesis; 5-aminolevulinate from L-glutamyl-tRNA(Glu): step 2/2. The sequence is that of Glutamate-1-semialdehyde 2,1-aminomutase from Paenarthrobacter aurescens (strain TC1).